A 380-amino-acid polypeptide reads, in one-letter code: cAMP-dependent protein kinase type I-alpha regulatory subunit (380 aa).

N-acetylmethionine is present on methionine 1. The residue at position 2 (alanine 2) is an N-acetylalanine; in cAMP-dependent protein kinase type I-alpha regulatory subunit, N-terminally processed. The dimerization and phosphorylation stretch occupies residues 2–135 (ASGTTASEEE…ALAKAIEKNV (134 aa)). Phosphoserine occurs at positions 3, 76, and 82. Positions 64-96 (IQNLQKAGSRADSREDEISPPPPNPVVKGRRRR) are disordered. The Pseudophosphorylation motif motif lies at 95–99 (RRGAI). Position 100 is a phosphoserine (serine 100). Residues 136-253 (LFSH…SKVS), glutamate 201, arginine 210, 254-380 (ILES…SLSV), glutamate 325, and arginine 334 contribute to the 3',5'-cyclic AMP site. A Phosphoserine modification is found at serine 257.

It belongs to the cAMP-dependent kinase regulatory chain family. In terms of assembly, the inactive holoenzyme is composed of two regulatory chains and two catalytic chains. Activation by cAMP releases the two active catalytic monomers and the regulatory dimer. Interacts with PRKACA and PRKACB. PRKAR1A also interacts with RFC2; the complex may be involved in cell survival. Interacts with AKAP4. Interacts with RARA; the interaction occurs in the presence of cAMP or FSH and regulates RARA transcriptional activity. Interacts with the phosphorylated form of PJA2. Interacts with CBFA2T3. Interacts with PRKX; regulates this cAMP-dependent protein kinase. Interacts with smAKAP; this interaction may target PRKAR1A to the plasma membrane. Interacts with AICDA. The pseudophosphorylation site binds to the substrate-binding region of the catalytic chain, resulting in the inhibition of its activity. The physiological significance of the in vitro phosphorylation of a proximal serine is unclear. In terms of tissue distribution, four types of regulatory chains are found: I-alpha, I-beta, II-alpha, and II-beta. Their expression varies among tissues and is in some cases constitutive and in others inducible.

It is found in the cell membrane. Functionally, regulatory subunit of the cAMP-dependent protein kinases involved in cAMP signaling in cells. The chain is cAMP-dependent protein kinase type I-alpha regulatory subunit (PRKAR1A) from Bos taurus (Bovine).